A 474-amino-acid polypeptide reads, in one-letter code: uncharacterized protein (474 aa).

The span at 1–14 shows a compositional bias: polar residues; it reads MGSRYPSHQLSNGL. The tract at residues 1 to 137 is disordered; sequence MGSRYPSHQL…QSGGVTRQNS (137 aa). Ser-45 carries the phosphoserine modification. 3 stretches are compositionally biased toward polar residues: residues 73–83, 97–113, and 125–137; these read RSGSFAGTAQS, SLASAGSVSMKKTNSGP, and SGPQSGGVTRQNS. A Phosphoserine modification is found at Ser-169. 2 helical membrane-spanning segments follow: residues 210–230 and 236–256; these read VLWLVVLIFIMGFLAGGFILG and ILLVVVAILFTVVAALFIWNI.

It is found in the membrane. This is an uncharacterized protein from Arabidopsis thaliana (Mouse-ear cress).